The following is a 398-amino-acid chain: Phosphoglycerate kinase (398 aa).

Residues 23 to 25 (DFN), R38, 61 to 64 (HLGK), R122, and R155 each bind substrate. ATP-binding positions include K206, G297, E328, and 354 to 357 (GGDS).

The protein belongs to the phosphoglycerate kinase family. Monomer.

The protein localises to the cytoplasm. The enzyme catalyses (2R)-3-phosphoglycerate + ATP = (2R)-3-phospho-glyceroyl phosphate + ADP. It participates in carbohydrate degradation; glycolysis; pyruvate from D-glyceraldehyde 3-phosphate: step 2/5. The sequence is that of Phosphoglycerate kinase from Clostridium kluyveri (strain NBRC 12016).